The chain runs to 788 residues: Spastin (788 aa).

Residues 1 to 105 are disordered; the sequence is MVRTKNQSSS…PRSAGGPSSV (105 aa). Over 1-116 the chain is Cytoplasmic; that stretch reads MVRTKNQSSS…KQNLYVVSFP (116 aa). The required for localization to punctate cytoplasmic foci stretch occupies residues 1 to 227; that stretch reads MVRTKNQSSS…NRSGSGYSPG (227 aa). Composition is skewed to low complexity over residues 8–48 and 57–75; these read SSSS…SSHR and ATNV…SSPD. An intramembrane region (helical) is located at residues 117-137; sequence IIFLFNVLRSLIYQLFCIFRY. At 138-788 the chain is on the cytoplasmic side; it reads LYGASTKVIY…WSSDYGDITI (651 aa). A sufficient for interaction with microtubules and microtubule severing region spans residues 227-788; it reads GPGDPLLAKQ…WSSDYGDITI (562 aa). The MIT domain occupies 240-315; sequence HRRAFEYISK…SMARDRLHFL (76 aa). Positions 330–353 are enriched in basic and acidic residues; it reads KEEQKPNPSREQHQKPQKAREAAD. Residues 330–484 are disordered; the sequence is KEEQKPNPSR…SGSGSGASTP (155 aa). The segment covering 380-400 has biased composition (low complexity); it reads LTTPRISATATTPTSSSSLAS. 2 stretches are compositionally biased toward polar residues: residues 419 to 433 and 453 to 469; these read NKSQ…SKTS and QFSS…RTPI. Residues 471 to 485 form a required for interaction with microtubules region; that stretch reads NNGASGSGSGASTPV. Residue 553-560 coordinates ATP; sequence GPPGNGKT.

Belongs to the AAA ATPase family. Spastin subfamily. In terms of assembly, homohexamer. The homohexamer is stabilized by ATP-binding. The homohexamer may adopt a ring conformation through which microtubules pass prior to being severed. Interacts with microtubules. Interacts with atl; may be involved in microtubule dynamics.

It localises to the membrane. Its subcellular location is the cytoplasm. It is found in the cytoskeleton. The protein localises to the microtubule organizing center. The protein resides in the centrosome. It localises to the chromosome. Its subcellular location is the lipid droplet. It carries out the reaction n ATP + n H2O + a microtubule = n ADP + n phosphate + (n+1) alpha/beta tubulin heterodimers.. ATP-dependent microtubule severing protein. Stimulates microtubule minus-end depolymerization and poleward microtubule flux in the mitotic spindle. Regulates microtubule stability in the neuromuscular junction synapse. Involved in lipid metabolism by regulating the size and distribution of lipid droplets. Involved in axon regeneration by regulating microtubule severing. The sequence is that of Spastin from Drosophila pseudoobscura pseudoobscura (Fruit fly).